The chain runs to 589 residues: UvrABC system protein C (589 aa).

In terms of domain architecture, GIY-YIG spans 10–87 (ESSGVYLMKK…IKKYSPKYNI (78 aa)). The UVR domain maps to 197–232 (SKLINELTALMNKASQDMDFEKSIIYREQIKELKSI).

It belongs to the UvrC family. Interacts with UvrB in an incision complex.

Its subcellular location is the cytoplasm. The UvrABC repair system catalyzes the recognition and processing of DNA lesions. UvrC both incises the 5' and 3' sides of the lesion. The N-terminal half is responsible for the 3' incision and the C-terminal half is responsible for the 5' incision. The protein is UvrABC system protein C of Fusobacterium nucleatum subsp. nucleatum (strain ATCC 25586 / DSM 15643 / BCRC 10681 / CIP 101130 / JCM 8532 / KCTC 2640 / LMG 13131 / VPI 4355).